We begin with the raw amino-acid sequence, 344 residues long: 4-hydroxy-3-methylbut-2-en-1-yl diphosphate synthase (flavodoxin) (344 aa).

[4Fe-4S] cluster contacts are provided by cysteine 253, cysteine 256, cysteine 288, and glutamate 295.

It belongs to the IspG family. [4Fe-4S] cluster is required as a cofactor.

It carries out the reaction (2E)-4-hydroxy-3-methylbut-2-enyl diphosphate + oxidized [flavodoxin] + H2O + 2 H(+) = 2-C-methyl-D-erythritol 2,4-cyclic diphosphate + reduced [flavodoxin]. The protein operates within isoprenoid biosynthesis; isopentenyl diphosphate biosynthesis via DXP pathway; isopentenyl diphosphate from 1-deoxy-D-xylulose 5-phosphate: step 5/6. In terms of biological role, converts 2C-methyl-D-erythritol 2,4-cyclodiphosphate (ME-2,4cPP) into 1-hydroxy-2-methyl-2-(E)-butenyl 4-diphosphate. In Thermotoga maritima (strain ATCC 43589 / DSM 3109 / JCM 10099 / NBRC 100826 / MSB8), this protein is 4-hydroxy-3-methylbut-2-en-1-yl diphosphate synthase (flavodoxin).